Here is a 334-residue protein sequence, read N- to C-terminus: Holliday junction branch migration complex subunit RuvB (334 aa).

Positions A4–Y184 are large ATPase domain (RuvB-L). Residues R24, G65, K68, T69, T70, E131–Y133, R174, Y184, and R221 each bind ATP. T69 lines the Mg(2+) pocket. Residues N185 to D255 are small ATPAse domain (RuvB-S). The interval S258–E334 is head domain (RuvB-H). The DNA site is built by R294, R313, and R318.

It belongs to the RuvB family. In terms of assembly, homohexamer. Forms an RuvA(8)-RuvB(12)-Holliday junction (HJ) complex. HJ DNA is sandwiched between 2 RuvA tetramers; dsDNA enters through RuvA and exits via RuvB. An RuvB hexamer assembles on each DNA strand where it exits the tetramer. Each RuvB hexamer is contacted by two RuvA subunits (via domain III) on 2 adjacent RuvB subunits; this complex drives branch migration. In the full resolvosome a probable DNA-RuvA(4)-RuvB(12)-RuvC(2) complex forms which resolves the HJ.

The protein resides in the cytoplasm. It catalyses the reaction ATP + H2O = ADP + phosphate + H(+). The RuvA-RuvB-RuvC complex processes Holliday junction (HJ) DNA during genetic recombination and DNA repair, while the RuvA-RuvB complex plays an important role in the rescue of blocked DNA replication forks via replication fork reversal (RFR). RuvA specifically binds to HJ cruciform DNA, conferring on it an open structure. The RuvB hexamer acts as an ATP-dependent pump, pulling dsDNA into and through the RuvAB complex. RuvB forms 2 homohexamers on either side of HJ DNA bound by 1 or 2 RuvA tetramers; 4 subunits per hexamer contact DNA at a time. Coordinated motions by a converter formed by DNA-disengaged RuvB subunits stimulates ATP hydrolysis and nucleotide exchange. Immobilization of the converter enables RuvB to convert the ATP-contained energy into a lever motion, pulling 2 nucleotides of DNA out of the RuvA tetramer per ATP hydrolyzed, thus driving DNA branch migration. The RuvB motors rotate together with the DNA substrate, which together with the progressing nucleotide cycle form the mechanistic basis for DNA recombination by continuous HJ branch migration. Branch migration allows RuvC to scan DNA until it finds its consensus sequence, where it cleaves and resolves cruciform DNA. In Shewanella baltica (strain OS223), this protein is Holliday junction branch migration complex subunit RuvB.